The chain runs to 129 residues: Small ribosomal subunit protein uS11 (129 aa).

The protein belongs to the universal ribosomal protein uS11 family. Part of the 30S ribosomal subunit. Interacts with proteins S7 and S18. Binds to IF-3.

Functionally, located on the platform of the 30S subunit, it bridges several disparate RNA helices of the 16S rRNA. Forms part of the Shine-Dalgarno cleft in the 70S ribosome. This is Small ribosomal subunit protein uS11 from Enterobacter sp. (strain 638).